The sequence spans 309 residues: Branched-chain-amino-acid aminotransferase (309 aa).

Lys160 bears the N6-(pyridoxal phosphate)lysine mark.

It belongs to the class-IV pyridoxal-phosphate-dependent aminotransferase family. Homohexamer. Requires pyridoxal 5'-phosphate as cofactor.

It carries out the reaction L-leucine + 2-oxoglutarate = 4-methyl-2-oxopentanoate + L-glutamate. It catalyses the reaction L-isoleucine + 2-oxoglutarate = (S)-3-methyl-2-oxopentanoate + L-glutamate. The enzyme catalyses L-valine + 2-oxoglutarate = 3-methyl-2-oxobutanoate + L-glutamate. The protein operates within amino-acid biosynthesis; L-isoleucine biosynthesis; L-isoleucine from 2-oxobutanoate: step 4/4. It functions in the pathway amino-acid biosynthesis; L-leucine biosynthesis; L-leucine from 3-methyl-2-oxobutanoate: step 4/4. It participates in amino-acid biosynthesis; L-valine biosynthesis; L-valine from pyruvate: step 4/4. In terms of biological role, acts on leucine, isoleucine and valine. The protein is Branched-chain-amino-acid aminotransferase (ilvE) of Salmonella typhi.